A 1299-amino-acid polypeptide reads, in one-letter code: DNA-directed RNA polymerase subunit beta' (1299 aa).

4 residues coordinate Zn(2+): Cys60, Cys62, Cys75, and Cys78. Residues Asp535, Asp537, and Asp539 each contribute to the Mg(2+) site. Zn(2+) contacts are provided by Cys877, Cys954, Cys961, and Cys964.

This sequence belongs to the RNA polymerase beta' chain family. As to quaternary structure, the RNAP catalytic core consists of 2 alpha, 1 beta, 1 beta' and 1 omega subunit. When a sigma factor is associated with the core the holoenzyme is formed, which can initiate transcription. Mg(2+) is required as a cofactor. Requires Zn(2+) as cofactor.

The catalysed reaction is RNA(n) + a ribonucleoside 5'-triphosphate = RNA(n+1) + diphosphate. Its function is as follows. DNA-dependent RNA polymerase catalyzes the transcription of DNA into RNA using the four ribonucleoside triphosphates as substrates. In Paenarthrobacter aurescens (strain TC1), this protein is DNA-directed RNA polymerase subunit beta'.